The chain runs to 188 residues: ATP synthase subunit delta (188 aa).

Belongs to the ATPase delta chain family. In terms of assembly, F-type ATPases have 2 components, F(1) - the catalytic core - and F(0) - the membrane proton channel. F(1) has five subunits: alpha(3), beta(3), gamma(1), delta(1), epsilon(1). F(0) has three main subunits: a(1), b(2) and c(10-14). The alpha and beta chains form an alternating ring which encloses part of the gamma chain. F(1) is attached to F(0) by a central stalk formed by the gamma and epsilon chains, while a peripheral stalk is formed by the delta and b chains.

It localises to the cell inner membrane. In terms of biological role, f(1)F(0) ATP synthase produces ATP from ADP in the presence of a proton or sodium gradient. F-type ATPases consist of two structural domains, F(1) containing the extramembraneous catalytic core and F(0) containing the membrane proton channel, linked together by a central stalk and a peripheral stalk. During catalysis, ATP synthesis in the catalytic domain of F(1) is coupled via a rotary mechanism of the central stalk subunits to proton translocation. Functionally, this protein is part of the stalk that links CF(0) to CF(1). It either transmits conformational changes from CF(0) to CF(1) or is implicated in proton conduction. The protein is ATP synthase subunit delta of Rhizobium etli (strain CIAT 652).